A 265-amino-acid chain; its full sequence is C-type lectin domain family 12 member A (265 aa).

The Cytoplasmic segment spans residues Met1 to Ala43. An ITIM motif motif is present at residues Val5–Leu10. At Tyr7 the chain carries Phosphotyrosine. The helical; Signal-anchor for type II membrane protein transmembrane segment at Leu44–Phe64 threads the bilayer. Over His65 to Ala265 the chain is Extracellular. Residues Asn88 and Asn98 are each glycosylated (N-linked (GlcNAc...) asparagine). 4 disulfide bridges follow: Cys118/Cys130, Cys133/Cys144, Cys161/Cys248, and Cys227/Cys240. In terms of domain architecture, C-type lectin spans His140–Glu249. A glycan (N-linked (GlcNAc...) asparagine) is linked at Asn165.

As to quaternary structure, homodimer; disulfide-linked. Interacts (when the ITIM motif is phosphorylated) with PTPN6 and PTPN11. Phosphorylated at Tyr-7 by SRC in the ITIM motif following ligand-binding, promoting recruitment of tyrosine-protein phosphatases PTPN6 and PTPN11. Post-translationally, highly N-glycosylated; glycosylation varies between cell types. As to expression, preferentially expressed in lymphoid tissues and immune cells, including natural killer (NK) cells, T-cells, dendritic cells and monocytes or macrophages. Detected in spleen macrophage-rich red pulp and in lymph node (at protein level). Detected in peripheral blood leukocytes, dendritic cells, bone marrow, monocytes, mononuclear leukocytes and macrophages.

The protein resides in the cell membrane. Its function is as follows. Myeloid inhibitory C-type lectin receptor that acts as a negative regulator of myeloid cell activation. Myeloid cell inhibition is required to limit proinflammatory pathways and protect against excessive inflammation. Specifically recognizes and binds various structures, such as neutrophil extracellular traps (NETs) or monosodium urate crystals. Also acts as a pattern-recognition receptor for pathogen-associated molecules, such as plasmodium hemozoin or mycobacterial micolic acid. Ligand-binding induces phosphorylation of its ITIM motif, followed by recruitment of tyrosine-protein phosphatases PTPN6 and PTPN11, which counteract tyrosine-protein kinase SYK, thereby preventing myeloid cell activation. Acts as a pattern-recognition receptor for NETs in neutrophils: specifically recognizes DNA in NETs, leading to inhibit neutrophil activation and limit further NET formation. This regulation is essential for controlling key neutrophil responses and limit NET-mediated inflammatory conditions. Also recognizes dead cells by acting as a receptor for monosodium urate crystals, leading to down-regulate neutrophil activation. Binding to monosodium urate crystals also promotes the type I interferon response. Acts as an inhibitor of natural killer (NK) cell cytotoxicity. Also acts as an ihibitor of dendritic cell maturation in an IL10-dependent manner. This Homo sapiens (Human) protein is C-type lectin domain family 12 member A.